The primary structure comprises 467 residues: Hydroxymethylglutaryl-CoA synthase erg13A (467 aa).

(3S)-3-hydroxy-3-methylglutaryl-CoA is bound at residue A35. E86 serves as the catalytic Proton donor/acceptor. Residues C118, T160, S209, H259, K268, N334, and S368 each contribute to the (3S)-3-hydroxy-3-methylglutaryl-CoA site. C118 serves as the catalytic Acyl-thioester intermediate. The active-site Proton donor/acceptor is H259.

The protein belongs to the thiolase-like superfamily. HMG-CoA synthase family.

It carries out the reaction acetoacetyl-CoA + acetyl-CoA + H2O = (3S)-3-hydroxy-3-methylglutaryl-CoA + CoA + H(+). It participates in metabolic intermediate biosynthesis; (R)-mevalonate biosynthesis; (R)-mevalonate from acetyl-CoA: step 2/3. Functionally, hydroxymethylglutaryl-CoA synthase; part of the first module of ergosterol biosynthesis pathway that includes the early steps of the pathway, conserved across all eukaryotes, and which results in the formation of mevalonate from acetyl-coenzyme A (acetyl-CoA). Erg13A and erg13B condense acetyl-CoA with acetoacetyl-CoA to form hydroxymethylglutaryl-CoA (HMG-CoA). The first module starts with the action of the cytosolic acetyl-CoA acetyltransferase erg10B that catalyzes the formation of acetoacetyl-CoA. The hydroxymethylglutaryl-CoA synthases erg13A and erg13B then condense acetyl-CoA with acetoacetyl-CoA to form HMG-CoA. The rate-limiting step of the early module is the reduction to mevalonate by the 3-hydroxy-3-methylglutaryl-coenzyme A (HMG-CoA) reductases hmg1 and hmg2. Mevalonate is also a precursor for the extracellular siderophore triacetylfusarinine C (TAFC). This Aspergillus fumigatus (strain ATCC MYA-4609 / CBS 101355 / FGSC A1100 / Af293) (Neosartorya fumigata) protein is Hydroxymethylglutaryl-CoA synthase erg13A.